A 273-amino-acid chain; its full sequence is Glutamate racemase (273 aa).

Substrate contacts are provided by residues 9-10 (DS) and 41-42 (YG). Residue Cys-73 is the Proton donor/acceptor of the active site. 74–75 (NT) is a substrate binding site. Residue Cys-183 is the Proton donor/acceptor of the active site. 184 to 185 (TH) lines the substrate pocket.

This sequence belongs to the aspartate/glutamate racemases family.

The enzyme catalyses L-glutamate = D-glutamate. It participates in cell wall biogenesis; peptidoglycan biosynthesis. Functionally, provides the (R)-glutamate required for cell wall biosynthesis. In Shewanella sp. (strain ANA-3), this protein is Glutamate racemase.